Consider the following 691-residue polypeptide: DNA-directed RNA polymerase subunit beta' (691 aa).

Zn(2+) is bound by residues C69, C71, C87, and C90. Residues D489, D491, and D493 each coordinate Mg(2+).

This sequence belongs to the RNA polymerase beta' chain family. RpoC1 subfamily. As to quaternary structure, in plastids the minimal PEP RNA polymerase catalytic core is composed of four subunits: alpha, beta, beta', and beta''. When a (nuclear-encoded) sigma factor is associated with the core the holoenzyme is formed, which can initiate transcription. Mg(2+) serves as cofactor. The cofactor is Zn(2+).

The protein localises to the plastid. It is found in the chloroplast. It carries out the reaction RNA(n) + a ribonucleoside 5'-triphosphate = RNA(n+1) + diphosphate. In terms of biological role, DNA-dependent RNA polymerase catalyzes the transcription of DNA into RNA using the four ribonucleoside triphosphates as substrates. This Jasminum nudiflorum (Winter jasmine) protein is DNA-directed RNA polymerase subunit beta'.